We begin with the raw amino-acid sequence, 84 residues long: Delta-conotoxin-like MVIA (84 aa).

Positions 1 to 22 (MKLTCVMIVAVLFLTTWTFVTA) are cleaved as a signal peptide. The propeptide occupies 23–49 (DDSRYGLKNLFPKARHEMKNPEASKLN). 3 cysteine pairs are disulfide-bonded: Cys-54–Cys-69, Cys-61–Cys-73, and Cys-68–Cys-77. The residue at position 65 (Pro-65) is a 4-hydroxyproline. Serine amide is present on Ser-83.

The protein belongs to the conotoxin O1 superfamily. As to expression, expressed by the venom duct.

Its subcellular location is the secreted. In terms of biological role, delta-conotoxins bind to site 6 of voltage-gated sodium channels (Nav) and inhibit the inactivation process. This chain is Delta-conotoxin-like MVIA, found in Conus magus (Magical cone).